Consider the following 103-residue polypeptide: G0/G1 switch protein 2 (103 aa).

The interval 80 to 103 is disordered; it reads LQEKGKQQDTVLGGRALSNRQHAS.

As to quaternary structure, directly interacts with BCL2; this interaction prevents the formation of the anti-apoptotic BAX-BCL2 complex. Widely expressed with highest levels in peripheral blood, skeletal muscle and heart, followed by kidney and liver.

It localises to the mitochondrion. Functionally, promotes apoptosis by binding to BCL2, hence preventing the formation of protective BCL2-BAX heterodimers. This Homo sapiens (Human) protein is G0/G1 switch protein 2 (G0S2).